Consider the following 368-residue polypeptide: MTGKGCIIELKNVSKIFEDTCALDNINLQIANGEFLTLLGPSGCGKTTILRIISGFETPDVGEILIAGVNVSGFPPERRQVNTVFQHYALFPHMTVRDNVAFGLRMQKCPREKVNELVFEALRMVHLENFADRRPSQLSGGQQQRVAIARAVVNKPLLLLLDEPFSALDHKLRQIMQLEIKHLQRKLGITFVFVTHDQEEAFAMSDRVVVMNQGRIEQIGTPQCIYEEPVNLFVARFVGEINNLAGTILSCNDEGIYEAAIANEVFPLRTPHRFSPGEAVNVLLRPEDIRIYLLDEEVLKVPHLRGRIEETVYKGATVDIIIALDVGGTLRVAEFFNEDDAEISYNEGERVAVTWVDGWEVVLPHEMA.

An ABC transporter domain is found at 8–238 (IELKNVSKIF…PVNLFVARFV (231 aa)). An ATP-binding site is contributed by 40 to 47 (GPSGCGKT).

The protein belongs to the ABC transporter superfamily. Spermidine/putrescine importer (TC 3.A.1.11.1) family. The complex is composed of two ATP-binding proteins (PotA), two transmembrane proteins (PotB and PotC) and a solute-binding protein (PotD).

The protein localises to the cell membrane. It catalyses the reaction ATP + H2O + polyamine-[polyamine-binding protein]Side 1 = ADP + phosphate + polyamineSide 2 + [polyamine-binding protein]Side 1.. Functionally, part of the ABC transporter complex PotABCD involved in spermidine/putrescine import. Responsible for energy coupling to the transport system. In Lawsonia intracellularis (strain PHE/MN1-00), this protein is Spermidine/putrescine import ATP-binding protein PotA.